A 154-amino-acid polypeptide reads, in one-letter code: Myoglobin (154 aa).

The 147-residue stretch at 2–148 (GLSDGEWQIV…FRNDIAAKYK (147 aa)) folds into the Globin domain. At S4 the chain carries Phosphoserine. Residue H65 participates in nitrite binding. H65 is an O2 binding site. T68 carries the phosphothreonine modification. H94 is a binding site for heme b.

Belongs to the globin family. Monomeric.

The protein resides in the cytoplasm. The protein localises to the sarcoplasm. It carries out the reaction Fe(III)-heme b-[protein] + nitric oxide + H2O = Fe(II)-heme b-[protein] + nitrite + 2 H(+). The enzyme catalyses H2O2 + AH2 = A + 2 H2O. In terms of biological role, monomeric heme protein which primary function is to store oxygen and facilitate its diffusion within muscle tissues. Reversibly binds oxygen through a pentacoordinated heme iron and enables its timely and efficient release as needed during periods of heightened demand. Depending on the oxidative conditions of tissues and cells, and in addition to its ability to bind oxygen, it also has a nitrite reductase activity whereby it regulates the production of bioactive nitric oxide. Under stress conditions, like hypoxia and anoxia, it also protects cells against reactive oxygen species thanks to its pseudoperoxidase activity. The sequence is that of Myoglobin (MB) from Canis lupus familiaris (Dog).